The primary structure comprises 216 residues: Flagellin B3 (216 aa).

A propeptide spanning residues 1-11 (MLLDYIKSRRG) is cleaved from the precursor.

This sequence belongs to the archaeal flagellin family.

The protein resides in the archaeal flagellum. Flagellin is the subunit protein which polymerizes to form the filaments of archaeal flagella. In Methanocaldococcus jannaschii (strain ATCC 43067 / DSM 2661 / JAL-1 / JCM 10045 / NBRC 100440) (Methanococcus jannaschii), this protein is Flagellin B3 (flaB3).